Here is a 548-residue protein sequence, read N- to C-terminus: pH-responsive protein 1 (548 aa).

The N-terminal stretch at 1 to 20 (MYSLIKSLATFATLFSLTLA) is a signal peptide. Asn-41 carries an N-linked (GlcNAc...) asparagine glycan. Cys-82 and Cys-111 form a disulfide bridge. 2 N-linked (GlcNAc...) asparagine glycosylation sites follow: Asn-173 and Asn-261. 5 cysteine pairs are disulfide-bonded: Cys-224–Cys-358, Cys-242–Cys-273, Cys-381–Cys-432, Cys-390–Cys-456, and Cys-409–Cys-414. A disordered region spans residues 483 to 518 (GKASSSGGSSKSGSSSASASGSSSSSTSSGSSSSSG). Ser-517 is lipidated: GPI-anchor amidated serine. Positions 518–548 (GVKATQQMSMVKLVSIITIVTAFVGGMSVVF) are cleaved as a propeptide — removed in mature form.

Belongs to the glycosyl hydrolase 72 family.

It is found in the cell membrane. Required for apical cell growth and plays an essential role in morphogenesis. May be integral to the pathogenic ability of the organism. This is pH-responsive protein 1 (PHR1) from Candida albicans (strain SC5314 / ATCC MYA-2876) (Yeast).